Here is a 361-residue protein sequence, read N- to C-terminus: Large ribosomal subunit protein uL3 (361 aa).

The tract at residues arginine 339 to glutamine 361 is disordered. The span at proline 350–glutamine 361 shows a compositional bias: polar residues.

Belongs to the universal ribosomal protein uL3 family. Part of the 50S ribosomal subunit. Forms a cluster with proteins L14 and L24e.

Its function is as follows. One of the primary rRNA binding proteins, it binds directly near the 3'-end of the 23S rRNA, where it nucleates assembly of the 50S subunit. The sequence is that of Large ribosomal subunit protein uL3 from Pyrococcus abyssi (strain GE5 / Orsay).